The primary structure comprises 150 residues: Transcriptional repressor NrdR (150 aa).

A zinc finger lies at 3-34 (CPFCHHPQSRVIDSRTVENGFVTRRRRQCTKC). The ATP-cone domain occupies 46–136 (LLVEKRNGVT…VYKSFSSMED (91 aa)).

This sequence belongs to the NrdR family. The cofactor is Zn(2+).

Its function is as follows. Negatively regulates transcription of bacterial ribonucleotide reductase nrd genes and operons by binding to NrdR-boxes. The chain is Transcriptional repressor NrdR from Corynebacterium kroppenstedtii (strain DSM 44385 / JCM 11950 / CIP 105744 / CCUG 35717).